We begin with the raw amino-acid sequence, 320 residues long: Ferrochelatase (320 aa).

Residues His-194 and Glu-275 each contribute to the Fe cation site.

It belongs to the ferrochelatase family. In terms of assembly, monomer.

It is found in the cytoplasm. It carries out the reaction heme b + 2 H(+) = protoporphyrin IX + Fe(2+). Its pathway is porphyrin-containing compound metabolism; protoheme biosynthesis; protoheme from protoporphyrin-IX: step 1/1. Catalyzes the ferrous insertion into protoporphyrin IX. This chain is Ferrochelatase, found in Shigella sonnei (strain Ss046).